We begin with the raw amino-acid sequence, 355 residues long: MSATPVTQLTPSSQPQQPCSPLLGASVTELTSWVQQQGQPAYRGKQLHDWIYHKGVRSLTDISVFSKQWRAAVADVPIGRSTIHHRSVASDGTVKYLLQLSDGEIVEAVGIPTDKRLTVCVSTQVGCPMACDFCATGKGGYKRNLERHEIVDQVLTVQEDFQQRVSHVVFMGMGEPLLNTENVLAGLRSLNQDVGIGQRSLTLSTVGIRDRISELAEHHLQVTLAVSLHAPNQALREQLIPSARSYHIEDLLAECREYVAITGRRISFEYILLAGVNDLPEHALELSKHLRGFQNHVNLIPYNSIDEVDYKRPSGDRIQAFLTVLQQQHIAVSVRYSRGLEADAACGQLRTKASR.

The segment at Met-1–Ser-20 is disordered. The active-site Proton acceptor is Glu-107. The Radical SAM core domain occupies Thr-113–Glu-341. A disulfide bridge connects residues Cys-120 and Cys-346. The [4Fe-4S] cluster site is built by Cys-127, Cys-131, and Cys-134. Residues Gly-174 to Glu-175, Ser-204, Ser-227 to His-229, and Asn-303 each bind S-adenosyl-L-methionine. The active-site S-methylcysteine intermediate is the Cys-346.

It belongs to the radical SAM superfamily. RlmN family. It depends on [4Fe-4S] cluster as a cofactor.

The protein localises to the cytoplasm. The enzyme catalyses adenosine(2503) in 23S rRNA + 2 reduced [2Fe-2S]-[ferredoxin] + 2 S-adenosyl-L-methionine = 2-methyladenosine(2503) in 23S rRNA + 5'-deoxyadenosine + L-methionine + 2 oxidized [2Fe-2S]-[ferredoxin] + S-adenosyl-L-homocysteine. The catalysed reaction is adenosine(37) in tRNA + 2 reduced [2Fe-2S]-[ferredoxin] + 2 S-adenosyl-L-methionine = 2-methyladenosine(37) in tRNA + 5'-deoxyadenosine + L-methionine + 2 oxidized [2Fe-2S]-[ferredoxin] + S-adenosyl-L-homocysteine. Specifically methylates position 2 of adenine 2503 in 23S rRNA and position 2 of adenine 37 in tRNAs. The chain is Probable dual-specificity RNA methyltransferase RlmN from Nostoc sp. (strain PCC 7120 / SAG 25.82 / UTEX 2576).